Here is a 965-residue protein sequence, read N- to C-terminus: MASRQGSKSRKAGLKGADSTASSTTSSSKLYQETSIDGHSSPASSSAQSKQQFFSPDPLPQTAQRSKENVTVTVRFRPLSPREIRQGEEVAWYADGETIVRNEHNPTIAYAYDRVFGPTTTTRNVYDIAAHHVVNGAMEGINGTIFAYGVTSSGKTHTMHGDQRSPGIIPLAVKDAFSIIQETPNREFLLRISYMEIYNEVVNDLLNPAGHNLRIREDKQGTFVEGIKEEVVLSPAHALSLIAAGEEQRHVGSTNFNLLSSRSHTIFTLTIESSPLGDKSKGEAVHLSQLNLVDLAGSESSKVETSGVRRKEGSYINKSLLTLGTVISKLTDVRASHVPYRDSKLTRILQSSLSGHDRVSLICTVTPASSSSEETHNTLKFAHRAKHIEIQAEQNKIIDEKSLIKKYQREIRQLKEELEQLKQEIVPVPQLKDIGADDIVLLKQKLEDGQVKLQSRLEEEEEAKAALLSRIQRLTKLILVSTKNPQASRLPHRFNPRRRHSFGEEELAYLPYKRRDMMDDEQLDLYVSVEGNHEIRDNAYREEKKTRKHGLLNWLKPKKRDHSSSASDQSSVVKSNSTPSTPQGGGSHLHTESRLSEGSPLMEQLSEPREDREALEDSSHEMEIPETSNKMSDELDLLREQKKILSEEAALQLSSLKRMSDEAAKSPQNEEINEEIKVLNDDIKAKNDQIATLERQIMDFVMTSHEALDKSDIMQAVAELRDQLNEKSFELEVKAADNRIIQQTLNEKTCECEVLQEEVANLKQQLSEALELAQGTKIKELKQDAKELSESKEQLELRNRKLAEESSYAKGLASAAAVELKALSEEVAKLMNQNERLAAELATQKSPIAQRNKTGTTTNVRNNGRRESLAKRQEHDSPSMELKRELRMSKERELSYEAALGEKEQREAELERILEETKQREAYLENELANMWVLVSKLRRSQGADSEISDSISETRQTEQTEGSF.

A disordered region spans residues 1-69 (MASRQGSKSR…PQTAQRSKEN (69 aa)). A compositionally biased stretch (low complexity) spans 19–28 (STASSTTSSS). A compositionally biased stretch (polar residues) spans 29-38 (KLYQETSIDG). Residues 40–56 (SSPASSSAQSKQQFFSP) are compositionally biased toward low complexity. Positions 69 to 388 (NVTVTVRFRP…LKFAHRAKHI (320 aa)) constitute a Kinesin motor domain. 149-156 (GVTSSGKT) is an ATP binding site. Positions 389–483 (EIQAEQNKII…LTKLILVSTK (95 aa)) form a coiled coil. Basic residues predominate over residues 551–561 (LLNWLKPKKRD). 2 disordered regions span residues 551–633 (LLNW…KMSD) and 842–888 (ATQK…ELRM). Residues 564 to 577 (SSASDQSSVVKSNS) show a composition bias toward low complexity. Over residues 606-623 (SEPREDREALEDSSHEME) the composition is skewed to basic and acidic residues. Coiled coils occupy residues 628–703 (SNKM…FVMT) and 738–846 (NRII…TQKS). A compositionally biased stretch (low complexity) spans 851 to 862 (RNKTGTTTNVRN). Residues 864 to 888 (GRRESLAKRQEHDSPSMELKRELRM) are compositionally biased toward basic and acidic residues. Residues 896-931 (YEAALGEKEQREAELERILEETKQREAYLENELANM) adopt a coiled-coil conformation. The segment at 942-965 (QGADSEISDSISETRQTEQTEGSF) is disordered. The segment covering 949–965 (SDSISETRQTEQTEGSF) has biased composition (polar residues).

Belongs to the TRAFAC class myosin-kinesin ATPase superfamily. Kinesin family. KIN-7 subfamily.

Its subcellular location is the plastid. The protein localises to the chloroplast. The chain is Kinesin-like protein KIN-7K, chloroplastic from Arabidopsis thaliana (Mouse-ear cress).